We begin with the raw amino-acid sequence, 359 residues long: Alanine racemase (359 aa).

Lys-34 functions as the Proton acceptor; specific for D-alanine in the catalytic mechanism. An N6-(pyridoxal phosphate)lysine modification is found at Lys-34. Residue Arg-129 coordinates substrate. Residue Tyr-255 is the Proton acceptor; specific for L-alanine of the active site. Substrate is bound at residue Met-303.

The protein belongs to the alanine racemase family. It depends on pyridoxal 5'-phosphate as a cofactor.

The catalysed reaction is L-alanine = D-alanine. Its pathway is amino-acid biosynthesis; D-alanine biosynthesis; D-alanine from L-alanine: step 1/1. In terms of biological role, catalyzes the interconversion of L-alanine and D-alanine. May also act on other amino acids. The polypeptide is Alanine racemase (alr) (Shigella dysenteriae serotype 1 (strain Sd197)).